The sequence spans 202 residues: IMP cyclohydrolase (202 aa).

Residues 29 to 52 (VQRDGTVTVEPTPDAPETDNPYIS) form a disordered region.

It belongs to the archaeal IMP cyclohydrolase family.

It catalyses the reaction IMP + H2O = 5-formamido-1-(5-phospho-D-ribosyl)imidazole-4-carboxamide. It participates in purine metabolism; IMP biosynthesis via de novo pathway; IMP from 5-formamido-1-(5-phospho-D-ribosyl)imidazole-4-carboxamide: step 1/1. Functionally, catalyzes the cyclization of 5-formylamidoimidazole-4-carboxamide ribonucleotide to IMP. The sequence is that of IMP cyclohydrolase from Haloarcula marismortui (strain ATCC 43049 / DSM 3752 / JCM 8966 / VKM B-1809) (Halobacterium marismortui).